We begin with the raw amino-acid sequence, 119 residues long: Ribonuclease P protein component (119 aa).

This sequence belongs to the RnpA family. In terms of assembly, consists of a catalytic RNA component (M1 or rnpB) and a protein subunit.

It carries out the reaction Endonucleolytic cleavage of RNA, removing 5'-extranucleotides from tRNA precursor.. Functionally, RNaseP catalyzes the removal of the 5'-leader sequence from pre-tRNA to produce the mature 5'-terminus. It can also cleave other RNA substrates such as 4.5S RNA. The protein component plays an auxiliary but essential role in vivo by binding to the 5'-leader sequence and broadening the substrate specificity of the ribozyme. This chain is Ribonuclease P protein component, found in Nitrosococcus oceani (strain ATCC 19707 / BCRC 17464 / JCM 30415 / NCIMB 11848 / C-107).